Reading from the N-terminus, the 225-residue chain is Ribonuclease 3 (225 aa).

The RNase III domain occupies 7–129 (MPRLCRTLGY…IIGAVYIDSG (123 aa)). Glu42 serves as a coordination point for Mg(2+). The active site involves Asp46. 2 residues coordinate Mg(2+): Asp115 and Glu118. Glu118 is an active-site residue. Positions 155–225 (DPKTLLQELL…AADALELMKR (71 aa)) constitute a DRBM domain.

Belongs to the ribonuclease III family. Homodimer. The cofactor is Mg(2+).

The protein localises to the cytoplasm. The enzyme catalyses Endonucleolytic cleavage to 5'-phosphomonoester.. Digests double-stranded RNA. Involved in the processing of primary rRNA transcript to yield the immediate precursors to the large and small rRNAs (23S and 16S). Processes some mRNAs, and tRNAs when they are encoded in the rRNA operon. Processes pre-crRNA and tracrRNA of type II CRISPR loci if present in the organism. This Shewanella sediminis (strain HAW-EB3) protein is Ribonuclease 3.